Reading from the N-terminus, the 345-residue chain is MTVIVPIHGPAPAPAPVPERVGVLLVNLGTPDSCDTKGVRVYLREFLSDPRVIENQGLFWKLALNGIILNTRPARKAKDYQKIWNHEKNESPLKTITRAQAEKLAASLTDRSHLVVDWAMRYGNPSLRSRIEALVARGCSRLLVVPLYPQYSAATSATVCDQAFRVLRELRAQPTLRVTPPYYRDDAYIDALANSINAHLATLSFEPEMIVASFHGMPQAYIEKGDPYQSQCVATVDALRERMGLDEKKLLLTFQSRFGFDQWLQPYTDKTIEKLAKDGVRKLAVVMPGFASDCLETLEEIAQENAEIFMHNGGEEFSAIPCLNDSDDGIAVIRQLVMRELQGWL.

His-215 and Glu-296 together coordinate Fe cation.

It belongs to the ferrochelatase family.

The protein localises to the cytoplasm. The catalysed reaction is heme b + 2 H(+) = protoporphyrin IX + Fe(2+). It functions in the pathway porphyrin-containing compound metabolism; protoheme biosynthesis; protoheme from protoporphyrin-IX: step 1/1. Its function is as follows. Catalyzes the ferrous insertion into protoporphyrin IX. The chain is Ferrochelatase from Rhodopseudomonas palustris (strain BisB5).